Reading from the N-terminus, the 908-residue chain is PTS system glucose-specific EIICBA component (908 aa).

The PTS EIIC type-1; first part domain occupies 1 to 264 (MQISLVKIRN…YAPLWYTSAG (264 aa)). 5 consecutive transmembrane segments (helical) span residues 31–51 (LMIP…GDAI), 71–91 (GGNV…AITF), 100–120 (FSAF…IIPV), 155–175 (VFGG…FYAI), and 189–209 (FVPI…LMVW). The tract at residues 265 to 450 (GSLQEIANQQ…VSQFTVAVPS (186 aa)) is unknown. In terms of domain architecture, PTS EIIC type-1; second part spans 451–602 (LNPAQYSQGK…FNLATPGRGG (152 aa)). 5 consecutive transmembrane segments (helical) span residues 459-479 (GKFP…ILAA), 487-507 (ASSI…TEPF), 509-529 (FTFL…LAAV), 536-556 (LLSA…ILYG), and 571-591 (VPII…FLTI). Residues 631 to 713 (QIEAGMLLRA…QDIIQGKVNW (83 aa)) enclose the PTS EIIB type-1 domain. Residue Cys-653 is the Phosphocysteine intermediate; for EIIB activity of the active site. The PTS EIIA type-1 domain maps to 762 to 875 (DDTFKNRLVG…DPITPFIVMQ (114 aa)). Residue His-815 is the Tele-phosphohistidine intermediate; for EIIA activity of the active site.

The protein resides in the cell membrane. It carries out the reaction N(pros)-phospho-L-histidyl-[protein] + D-glucose(out) = D-glucose 6-phosphate(in) + L-histidyl-[protein]. The phosphoenolpyruvate-dependent sugar phosphotransferase system (sugar PTS), a major carbohydrate active transport system, catalyzes the phosphorylation of incoming sugar substrates concomitantly with their translocation across the cell membrane. This system is involved in glucose transport. The polypeptide is PTS system glucose-specific EIICBA component (ptsG) (Mycoplasma genitalium (strain ATCC 33530 / DSM 19775 / NCTC 10195 / G37) (Mycoplasmoides genitalium)).